The sequence spans 37 residues: TVIDVKCTSPKQCVPACKAAMGTVRAKCMNGKCKCYI.

3 disulfides stabilise this stretch: cysteine 7–cysteine 28, cysteine 13–cysteine 33, and cysteine 17–cysteine 35.

As to expression, expressed by the venom gland.

Its subcellular location is the secreted. Inhibitor of voltage-gated potassium channels. The protein is Potassium channel toxin alpha-KTx 2.19 of Rhopalurus junceus (Caribbean blue scorpion).